The chain runs to 183 residues: MSLACSRSLFFMAFTAGILALGASYYLEYAVGLVPCSLCLVQRLFMSVLTLCCGLAAVHGPQRVGLSLYWMVTLLSSLGGTTAAWRQVLFQSDSLQELAHCAPNPEEMFSSLPWLCALMRMFNDTADCAELSWTLFDLSIPEWSLLFFVGMSILAVYQLLRQVWMALQRPLSGQPSHPALVRD.

At 1 to 9 (MSLACSRSL) the chain is on the cytoplasmic side. A helical membrane pass occupies residues 10–26 (FFMAFTAGILALGASYY). The Periplasmic portion of the chain corresponds to 27–44 (LEYAVGLVPCSLCLVQRL). C36 and C39 form a disulfide bridge. The chain crosses the membrane as a helical span at residues 45 to 61 (FMSVLTLCCGLAAVHGP). At 62–68 (QRVGLSL) the chain is on the cytoplasmic side. The chain crosses the membrane as a helical span at residues 69 to 85 (YWMVTLLSSLGGTTAAW). Over 86–142 (RQVLFQSDSLQELAHCAPNPEEMFSSLPWLCALMRMFNDTADCAELSWTLFDLSIPE) the chain is Periplasmic. A disulfide bridge connects residues C101 and C128. Residues 143–161 (WSLLFFVGMSILAVYQLLR) traverse the membrane as a helical segment. Residues 162–183 (QVWMALQRPLSGQPSHPALVRD) lie on the Cytoplasmic side of the membrane.

The protein belongs to the DsbB family.

The protein localises to the cell inner membrane. Functionally, required for disulfide bond formation in some periplasmic proteins. Acts by oxidizing the DsbA protein. This chain is Disulfide bond formation protein B 2, found in Pseudomonas fluorescens (strain Pf0-1).